The primary structure comprises 344 residues: Holliday junction branch migration complex subunit RuvB (344 aa).

Residues 1-181 (MERIVTPAEM…FGVLCAMEYY (181 aa)) are large ATPase domain (RuvB-L). Residues Leu-20, Arg-21, Gly-62, Lys-65, Thr-66, Thr-67, 128 to 130 (EDY), Arg-171, Tyr-181, and Arg-218 contribute to the ATP site. Thr-66 serves as a coordination point for Mg(2+). Residues 182 to 252 (DENQLKEIVI…EAREALELLE (71 aa)) form a small ATPAse domain (RuvB-S) region. The head domain (RuvB-H) stretch occupies residues 255–344 (NQGFDKVDNK…SNKGQTSFFK (90 aa)). Positions 310 and 315 each coordinate DNA.

This sequence belongs to the RuvB family. Homohexamer. Forms an RuvA(8)-RuvB(12)-Holliday junction (HJ) complex. HJ DNA is sandwiched between 2 RuvA tetramers; dsDNA enters through RuvA and exits via RuvB. An RuvB hexamer assembles on each DNA strand where it exits the tetramer. Each RuvB hexamer is contacted by two RuvA subunits (via domain III) on 2 adjacent RuvB subunits; this complex drives branch migration. In the full resolvosome a probable DNA-RuvA(4)-RuvB(12)-RuvC(2) complex forms which resolves the HJ.

The protein resides in the cytoplasm. The enzyme catalyses ATP + H2O = ADP + phosphate + H(+). Functionally, the RuvA-RuvB-RuvC complex processes Holliday junction (HJ) DNA during genetic recombination and DNA repair, while the RuvA-RuvB complex plays an important role in the rescue of blocked DNA replication forks via replication fork reversal (RFR). RuvA specifically binds to HJ cruciform DNA, conferring on it an open structure. The RuvB hexamer acts as an ATP-dependent pump, pulling dsDNA into and through the RuvAB complex. RuvB forms 2 homohexamers on either side of HJ DNA bound by 1 or 2 RuvA tetramers; 4 subunits per hexamer contact DNA at a time. Coordinated motions by a converter formed by DNA-disengaged RuvB subunits stimulates ATP hydrolysis and nucleotide exchange. Immobilization of the converter enables RuvB to convert the ATP-contained energy into a lever motion, pulling 2 nucleotides of DNA out of the RuvA tetramer per ATP hydrolyzed, thus driving DNA branch migration. The RuvB motors rotate together with the DNA substrate, which together with the progressing nucleotide cycle form the mechanistic basis for DNA recombination by continuous HJ branch migration. Branch migration allows RuvC to scan DNA until it finds its consensus sequence, where it cleaves and resolves cruciform DNA. In Clostridium botulinum (strain Alaska E43 / Type E3), this protein is Holliday junction branch migration complex subunit RuvB.